The sequence spans 565 residues: Ubiquitin carboxyl-terminal hydrolase 39 (565 aa).

2 stretches are compositionally biased toward basic and acidic residues: residues 1–21 and 28–39; these read MSGR…ESES and VKRERDREREPE. 2 disordered regions span residues 1–61 and 75–96; these read MSGR…SARE and EREV…GRVD. Ser-46 is subject to Phosphoserine. Lys-51 is covalently cross-linked (Glycyl lysine isopeptide (Lys-Gly) (interchain with G-Cter in SUMO2)). Ser-82 carries the post-translational modification Phosphoserine. Residues 85–96 show a composition bias toward basic and acidic residues; it reads EREVRAKNGRVD. Residues 103-200 form a UBP-type; degenerate zinc finger; it reads RHCPYLDTIN…YVLKPTFTKQ (98 aa). Zn(2+) contacts are provided by Cys-136, Cys-139, His-155, and His-161. One can recognise a USP domain in the interval 225 to 555; sequence VGLNNIKAND…EAYIQIWKRR (331 aa).

Belongs to the peptidase C19 family. In terms of assembly, the U4/U6-U5 tri-snRNP complex is a building block of the precatalytic spliceosome (spliceosome B complex). Component of the U4/U6-U5 tri-snRNP complex composed of the U4, U6 and U5 snRNAs and at least PRPF3, PRPF4, PRPF6, PRPF8, PRPF31, SNRNP200, TXNL4A, SNRNP40, SNRPB, SNRPD1, SNRPD2, SNRPD3, SNRPE, SNRPF, SNRPG, DDX23, CD2BP2, PPIH, SNU13, EFTUD2, SART1 and USP39, plus LSM2, LSM3, LSM4, LSM5, LSM6, LSM7 and LSM8.

The protein localises to the nucleus. It carries out the reaction Thiol-dependent hydrolysis of ester, thioester, amide, peptide and isopeptide bonds formed by the C-terminal Gly of ubiquitin (a 76-residue protein attached to proteins as an intracellular targeting signal).. Deubiquitinating enzyme that plays a role in many cellular processes including cellular antiviral response, epithelial morphogenesis, DNA repair or B-cell development. Plays a role in pre-mRNA splicing as a component of the U4/U6-U5 tri-snRNP, one of the building blocks of the precatalytic spliceosome. Specifically regulates immunoglobulin gene rearrangement in a spliceosome-dependent manner, which involves modulating chromatin interactions at the Igh locus and therefore plays an essential role in B-cell development. Regulates AURKB mRNA levels, and thereby plays a role in cytokinesis and in the spindle checkpoint. Regulates apoptosis and G2/M cell cycle checkpoint in response to DNA damage by deubiquitinating and stabilizing CHK2. Also plays an important role in DNA repair by controlling the recruitment of XRCC4/LIG4 to DNA double-strand breaks for non-homologous end-joining repair. Participates in antiviral activity by affecting the type I IFN signaling by stabilizing STAT1 and decreasing its 'Lys-6'-linked ubiquitination. Contributes to non-canonical Wnt signaling during epidermal differentiation. Acts as a negative regulator NF-kappa-B activation through deubiquitination of 'Lys-48'-linked ubiquitination of NFKBIA. The chain is Ubiquitin carboxyl-terminal hydrolase 39 (USP39) from Pongo abelii (Sumatran orangutan).